A 432-amino-acid polypeptide reads, in one-letter code: Probable D-serine dehydratase (432 aa).

Residue lysine 112 is modified to N6-(pyridoxal phosphate)lysine.

The protein belongs to the serine/threonine dehydratase family. DsdA subfamily. The cofactor is pyridoxal 5'-phosphate.

The catalysed reaction is D-serine = pyruvate + NH4(+). The chain is Probable D-serine dehydratase from Pediococcus pentosaceus (strain ATCC 25745 / CCUG 21536 / LMG 10740 / 183-1w).